The sequence spans 718 residues: MTITSPVIKTPPLNSEIRLESNLTVESGDIEINEKDIVNASEVIVILDAGSQYSKVIDRRVRELNVASEIHPLNIDLLELIKIKSKSGSTIKGIIISGGPESVYGENAPKFDKSLFSEKLNLPIFGICYGMQLMNYIFGGKVESNSQREDGVHNIEILKDENQQLVSKLFKNLNQTEQVLLTHGDSVTKIADGFKIICKSDDGIVSGIENERLGYYGVQFHPEVDLTTNGKKMFSNFLIDICGCSANYTLDDREQQAITYIKSIVSNKKVLVLVSGGVDSTVCAALISKAIGPENVIALHIDNGFMRKDESLNVEKALSVLGLHLIVVDASQTFYNSTTTIKGHLTSSLKETISPEERRKIIGDTFMRVAENEVKKLGLQPEDVYLAQGTLRPDLIESSSKTVSGVADVIKTHHNDTELVRILRDSGRVVEPLKDYHKDEVRELGKSLGLSDSLVWRQPFPGPGLAIRIICADEPYLVNYDFTNNVVQYLVTGEASSELESEVKIKIDKQLTEMKCKRQDKITIKPVLLPIQTVGVQGDGRTYSYLLGLYSSENSTIDQIPWSYIFNLARTIPKICHNINRVVFIFSQNATKHTNIKVSNEPVKHITPTRLTPDVIKQLQHADSIVSEQLYKYNLIKSLSQVPVVSLPIDFGVTGNRSIAIRTFITNDFMTGVPAIPGKNISFDCLQEITNNILTSVNGISKVLFDCTSKPPGTTEFL.

Positions 43–247 (VIVILDAGSQ…LIDICGCSAN (205 aa)) constitute a Glutamine amidotransferase type-1 domain. Catalysis depends on for GATase activity residues cysteine 128, histidine 221, and glutamate 223. One can recognise a GMPS ATP-PPase domain in the interval 248 to 457 (YTLDDREQQA…LGLSDSLVWR (210 aa)). An ATP-binding site is contributed by 275-281 (SGGVDST).

As to quaternary structure, homodimer.

The enzyme catalyses XMP + L-glutamine + ATP + H2O = GMP + L-glutamate + AMP + diphosphate + 2 H(+). It functions in the pathway purine metabolism; GMP biosynthesis; GMP from XMP (L-Gln route): step 1/1. The protein is GMP synthase [glutamine-hydrolyzing] (guaA) of Dictyostelium discoideum (Social amoeba).